A 960-amino-acid chain; its full sequence is MNKNLRFTQMMIGISTMALSFGSIQTQVSAEETAPYNILQMKPMGTETSKDEIVHATKADETLNFEERLKIGDFSQRPTLVMKRDEIQLKQSYTLAELNKMPNSELIDTLSKISWNQITDLFQFNQDTKAFYQNKERMNVIINELGQRGRTFTKENSKGIETFVEVLRSAFYVGYYNNELSYLKERSFHDKCLPALKAIAKNRNFTLGTAEQDRVVTAYGKLIGNASSDTETVQYAVNVLKHYNDNLSTYVSDYAKGQAVYEIVKGIDYDIQSYLQDTNKQPNETMWYGKIDNFINEVNRIALVGNITNENSWLINNGIYYAGRLGKFHSNPNKGLEVITQAMNLYPRLSGAYFVAVEQMKTNYGGKDYSGNAVDLQKIREEGKQQYLPKTYTFDDGSIVFKTGDKVTEEKIKRLYWAAKEVKAQYHRVIGNDKALEPGNADDVLTIVIYNNPDEYQLNRQLYGYETNNGGIYIEEKGTFFTYERTPKQSIYSLEELFRHEFTHYLQGRYEVPGLFGSGEMYQNERLTWFQEGNAEFFAGSTRTNNVVPRKSMISGLSSDPASRYTVKQTLFSKYGSWDFYKYSFALQSYLYNHQFETFDKLQDLIRANDVKNYDSYRESLSNNTQLNAEYQAYMQQLIDNQDKYNVPKVTNDYLIQHAPKPLAEVKNEIVDVANIKDAKITKYESQFFNTFTVEGKYTGGTSKGESEDWKAMSKQVNQTLEQLSQKGWSGYKTVTAYFVNYRVNAANQFEYDIVFHGVATEEKEKTTTIVNMNGPYSGIVNEEIQFHSDGTKSENGKVISYLWNFGDGTTSTEANPTHVYGEKGTYTVELTVKDSRGKESKEQTKVTVKQDPQTSESYEEEKVLPFNTLVKGNLITPDQTDVYTFNVTDPKEVDISVVNEQNIGMTWVLYHESDMQNYVACGEDEGNVIKGKFAAKPGKYYLNVYKFDDKNGEYSLLVK.

An N-terminal signal peptide occupies residues 1 to 30; that stretch reads MNKNLRFTQMMIGISTMALSFGSIQTQVSA. Positions 31 to 92 are excised as a propeptide; it reads EETAPYNILQ…KRDEIQLKQS (62 aa). The segment at 93 to 365 is activator domain; sequence YTLAELNKMP…AVEQMKTNYG (273 aa). The segment at 93–764 is S1 metalloprotease domain; sequence YTLAELNKMP…VFHGVATEEK (672 aa). Positions 375–644 are catalytic subdomain; the sequence is DLQKIREEGK…MQQLIDNQDK (270 aa). Residue His500 participates in Zn(2+) binding. The active site involves Glu501. Residues His504 and Glu532 each contribute to the Zn(2+) site. The helper subdomain stretch occupies residues 652-764; it reads NDYLIQHAPK…VFHGVATEEK (113 aa). A PKD domain is found at 768 to 849; it reads TTIVNMNGPY…ESKEQTKVTV (82 aa). Over residues 836–845 the composition is skewed to basic and acidic residues; the sequence is SRGKESKEQT. Positions 836 to 859 are disordered; it reads SRGKESKEQTKVTVKQDPQTSESY. Residues 846–857 are compositionally biased toward polar residues; it reads KVTVKQDPQTSE. Residues 852 to 960 form a collagen-binding domain region; sequence DPQTSESYEE…KNGEYSLLVK (109 aa).

It belongs to the peptidase M9B family. Collagenase subfamily. Ca(2+) is required as a cofactor. Requires Zn(2+) as cofactor.

It is found in the secreted. It catalyses the reaction Digestion of native collagen in the triple helical region at Xaa-|-Gly bonds. With synthetic peptides, a preference is shown for Gly at P3 and P1', Pro and Ala at P2 and P2', and hydroxyproline, Ala or Arg at P3'.. Acts as a true collagenase, which is highly active and efficiently targets native tropocollagen. In vitro, can also cleave gelatin and the synthetic peptide FALGPA (furylacryloyl-Leu-Gly-Pro-Ala). May contribute to bacterial virulence in endophthalmitis or opportunistic infections via collagen degradation in the host extracellular matrix (ECM). The protein is Collagenase ColA of Bacillus cereus (strain ATCC 14579 / DSM 31 / CCUG 7414 / JCM 2152 / NBRC 15305 / NCIMB 9373 / NCTC 2599 / NRRL B-3711).